Consider the following 149-residue polypeptide: 3-hydroxyacyl-[acyl-carrier-protein] dehydratase FabZ (149 aa).

Histidine 49 is a catalytic residue.

Belongs to the thioester dehydratase family. FabZ subfamily.

Its subcellular location is the cytoplasm. The enzyme catalyses a (3R)-hydroxyacyl-[ACP] = a (2E)-enoyl-[ACP] + H2O. In terms of biological role, involved in unsaturated fatty acids biosynthesis. Catalyzes the dehydration of short chain beta-hydroxyacyl-ACPs and long chain saturated and unsaturated beta-hydroxyacyl-ACPs. The protein is 3-hydroxyacyl-[acyl-carrier-protein] dehydratase FabZ of Sulfurovum sp. (strain NBC37-1).